Here is a 118-residue protein sequence, read N- to C-terminus: DNA-binding protein Msm_0708 (118 aa).

The disordered stretch occupies residues 16–39 (EARQAAAQGQMQQQAQQQMQQQEA). Residues 18–39 (RQAAAQGQMQQQAQQQMQQQEA) are compositionally biased toward low complexity.

This sequence belongs to the PDCD5 family.

The polypeptide is DNA-binding protein Msm_0708 (Methanobrevibacter smithii (strain ATCC 35061 / DSM 861 / OCM 144 / PS)).